The chain runs to 106 residues: Pyrimidine/purine nucleoside phosphorylase (106 aa).

Belongs to the nucleoside phosphorylase PpnP family.

It catalyses the reaction a purine D-ribonucleoside + phosphate = a purine nucleobase + alpha-D-ribose 1-phosphate. The enzyme catalyses adenosine + phosphate = alpha-D-ribose 1-phosphate + adenine. It carries out the reaction cytidine + phosphate = cytosine + alpha-D-ribose 1-phosphate. The catalysed reaction is guanosine + phosphate = alpha-D-ribose 1-phosphate + guanine. It catalyses the reaction inosine + phosphate = alpha-D-ribose 1-phosphate + hypoxanthine. The enzyme catalyses thymidine + phosphate = 2-deoxy-alpha-D-ribose 1-phosphate + thymine. It carries out the reaction uridine + phosphate = alpha-D-ribose 1-phosphate + uracil. The catalysed reaction is xanthosine + phosphate = alpha-D-ribose 1-phosphate + xanthine. Functionally, catalyzes the phosphorolysis of diverse nucleosides, yielding D-ribose 1-phosphate and the respective free bases. Can use uridine, adenosine, guanosine, cytidine, thymidine, inosine and xanthosine as substrates. Also catalyzes the reverse reactions. This is Pyrimidine/purine nucleoside phosphorylase from Burkholderia vietnamiensis (strain G4 / LMG 22486) (Burkholderia cepacia (strain R1808)).